A 288-amino-acid polypeptide reads, in one-letter code: ATP synthase gamma chain (288 aa).

The protein belongs to the ATPase gamma chain family. F-type ATPases have 2 components, CF(1) - the catalytic core - and CF(0) - the membrane proton channel. CF(1) has five subunits: alpha(3), beta(3), gamma(1), delta(1), epsilon(1). CF(0) has three main subunits: a, b and c.

It localises to the cell inner membrane. Produces ATP from ADP in the presence of a proton gradient across the membrane. The gamma chain is believed to be important in regulating ATPase activity and the flow of protons through the CF(0) complex. The protein is ATP synthase gamma chain of Polaromonas naphthalenivorans (strain CJ2).